Reading from the N-terminus, the 472-residue chain is Putative cytochrome P450 135B1 (472 aa).

Cysteine 388 is a binding site for heme. The segment at 442-472 is disordered; sequence RDVSATSQATAQGAGCPAARGGGPSRAVGSQ. The span at 452–472 shows a compositional bias: low complexity; that stretch reads AQGAGCPAARGGGPSRAVGSQ.

It belongs to the cytochrome P450 family. Requires heme as cofactor.

This chain is Putative cytochrome P450 135B1 (cyp135B1), found in Mycobacterium bovis (strain ATCC BAA-935 / AF2122/97).